A 270-amino-acid polypeptide reads, in one-letter code: Formamidopyrimidine-DNA glycosylase (270 aa).

Proline 2 acts as the Schiff-base intermediate with DNA in catalysis. Residue glutamate 3 is the Proton donor of the active site. Lysine 58 (proton donor; for beta-elimination activity) is an active-site residue. Residues histidine 91, arginine 109, and arginine 151 each contribute to the DNA site. The segment at 236–270 (MVYNRQEEPCRLCGTPIRQIRQGQRSTYYCPLCQP) adopts an FPG-type zinc-finger fold. Arginine 260 (proton donor; for delta-elimination activity) is an active-site residue.

Belongs to the FPG family. As to quaternary structure, monomer. The cofactor is Zn(2+).

It carries out the reaction Hydrolysis of DNA containing ring-opened 7-methylguanine residues, releasing 2,6-diamino-4-hydroxy-5-(N-methyl)formamidopyrimidine.. The catalysed reaction is 2'-deoxyribonucleotide-(2'-deoxyribose 5'-phosphate)-2'-deoxyribonucleotide-DNA = a 3'-end 2'-deoxyribonucleotide-(2,3-dehydro-2,3-deoxyribose 5'-phosphate)-DNA + a 5'-end 5'-phospho-2'-deoxyribonucleoside-DNA + H(+). Functionally, involved in base excision repair of DNA damaged by oxidation or by mutagenic agents. Acts as a DNA glycosylase that recognizes and removes damaged bases. Has a preference for oxidized purines, such as 7,8-dihydro-8-oxoguanine (8-oxoG). Has AP (apurinic/apyrimidinic) lyase activity and introduces nicks in the DNA strand. Cleaves the DNA backbone by beta-delta elimination to generate a single-strand break at the site of the removed base with both 3'- and 5'-phosphates. This Chromobacterium violaceum (strain ATCC 12472 / DSM 30191 / JCM 1249 / CCUG 213 / NBRC 12614 / NCIMB 9131 / NCTC 9757 / MK) protein is Formamidopyrimidine-DNA glycosylase.